The chain runs to 502 residues: ATP synthase subunit alpha (502 aa).

Residue 169–176 (GDRQTGKT) participates in ATP binding.

The protein belongs to the ATPase alpha/beta chains family. F-type ATPases have 2 components, CF(1) - the catalytic core - and CF(0) - the membrane proton channel. CF(1) has five subunits: alpha(3), beta(3), gamma(1), delta(1), epsilon(1). CF(0) has three main subunits: a(1), b(2) and c(9-12). The alpha and beta chains form an alternating ring which encloses part of the gamma chain. CF(1) is attached to CF(0) by a central stalk formed by the gamma and epsilon chains, while a peripheral stalk is formed by the delta and b chains.

It localises to the cell inner membrane. It catalyses the reaction ATP + H2O + 4 H(+)(in) = ADP + phosphate + 5 H(+)(out). In terms of biological role, produces ATP from ADP in the presence of a proton gradient across the membrane. The alpha chain is a regulatory subunit. The protein is ATP synthase subunit alpha of Citrifermentans bemidjiense (strain ATCC BAA-1014 / DSM 16622 / JCM 12645 / Bem) (Geobacter bemidjiensis).